Reading from the N-terminus, the 264-residue chain is Pimeloyl-[acyl-carrier protein] methyl ester esterase (264 aa).

The AB hydrolase-1 domain occupies 23–244; it reads LVMLHGWGVN…MLAKASHAPF (222 aa). Substrate is bound by residues W29, 87–88, and 150–154; these read SL and FLAIQ. The active-site Nucleophile is S87. Active-site residues include D214 and H241. Position 241 (H241) interacts with substrate.

Belongs to the AB hydrolase superfamily. Carboxylesterase BioH family. In terms of assembly, monomer.

The protein resides in the cytoplasm. It catalyses the reaction 6-carboxyhexanoyl-[ACP] methyl ester + H2O = 6-carboxyhexanoyl-[ACP] + methanol + H(+). Its pathway is cofactor biosynthesis; biotin biosynthesis. Functionally, the physiological role of BioH is to remove the methyl group introduced by BioC when the pimeloyl moiety is complete. It allows to synthesize pimeloyl-ACP via the fatty acid synthetic pathway through the hydrolysis of the ester bonds of pimeloyl-ACP esters. This Shewanella sp. (strain MR-7) protein is Pimeloyl-[acyl-carrier protein] methyl ester esterase.